Here is a 663-residue protein sequence, read N- to C-terminus: Protein associated with UVRAG as autophagy enhancer (663 aa).

Disordered regions lie at residues Met-1–Glu-36 and Asp-65–Ala-136. Polar residues-rich tracts occupy residues Thr-80–Leu-93 and Pro-105–Thr-130. Positions Glu-196–Glu-235 are interaction with UVRAG. N6-acetyllysine occurs at positions 484, 534, 574, and 634.

As to quaternary structure, interacts with UVRAG; the interaction is direct and promotes association with the PI3K/PI3KC3 and HOPS complexes. Interacts with STX17. In terms of processing, acetylated by KAT5/TIP60 under autophagy induction, promoting autophagosome maturation and lipid metabolism. Lys-484 and Lys-574 constitute the key sites for tuning function in autophagy.

It is found in the cytoplasmic vesicle. Its subcellular location is the autophagosome membrane. Regulator of autophagy that promotes autophagosome maturation by facilitating the biogenesis of phosphatidylinositol 3-phosphate (PtdIns(3)P) in late steps of autophagy. Acts by antagonizing RUBCN, thereby stimulating phosphatidylinositol 3-kinase activity of the PI3K/PI3KC3 complex. Following anchorage to the autophagosomal SNARE STX17, promotes the recruitment of PI3K/PI3KC3 and HOPS complexes to the autophagosome to regulate the fusion specificity of autophagosomes with late endosomes/lysosomes. Binds phosphoinositides phosphatidylinositol 3-phosphate (PtdIns(3)P), 4-phosphate (PtdIns(4)P) and 5-phosphate (PtdIns(5)P). In addition to its role in autophagy, acts as a regulator of lipid and glycogen homeostasis. May act as a tumor suppressor. In Bos taurus (Bovine), this protein is Protein associated with UVRAG as autophagy enhancer.